The primary structure comprises 550 residues: Methionine--tRNA ligase (550 aa).

The 'HIGH' region signature appears at 13 to 23 (PYANGPLHFGH). Zn(2+) is bound by residues Cys-145, Cys-148, Cys-158, and Cys-161. Residues 331-335 (QFSKS) carry the 'KMSKS' region motif. Position 334 (Lys-334) interacts with ATP.

Belongs to the class-I aminoacyl-tRNA synthetase family. MetG type 1 subfamily. As to quaternary structure, monomer. Zn(2+) is required as a cofactor.

It localises to the cytoplasm. The catalysed reaction is tRNA(Met) + L-methionine + ATP = L-methionyl-tRNA(Met) + AMP + diphosphate. Its function is as follows. Is required not only for elongation of protein synthesis but also for the initiation of all mRNA translation through initiator tRNA(fMet) aminoacylation. This Chlamydia trachomatis serovar L2b (strain UCH-1/proctitis) protein is Methionine--tRNA ligase.